The sequence spans 479 residues: NADH-quinone oxidoreductase subunit N 2 (479 aa).

14 consecutive transmembrane segments (helical) span residues 4-24 (FVSFLPELVLLAGALALFVVT), 43-63 (GVLVAALATVNHSAVLFSGAY), 67-87 (AFSQLLKIAIAFGYLCVGILS), 99-119 (PEYFLFLALSMTGLLALVSSI), 121-141 (VITLIIALELSSFPLYLMVAM), 159-179 (IMFGIAANGVMFFGFGYLYGL), 201-221 (AVTGLALTLAGFLYKLAVFPF), 239-259 (LIASLPKLGAVAVLVRFVSLA), 267-287 (ATLLTCLAIASMVYGNLIALV), 294-314 (LLGFSGIAHAGYVMVGFVAMD), 318-338 (FASALYYIAGYMLMVLACFVV), 364-384 (LAVTLIVGVFALAGVPPFVGF), 401-421 (ALVVLTVINSAIAIYYYLQIV), and 444-464 (ALCVLLIVAITLLGVAPAFTI).

This sequence belongs to the complex I subunit 2 family. In terms of assembly, NDH-1 is composed of 14 different subunits. Subunits NuoA, H, J, K, L, M, N constitute the membrane sector of the complex.

It localises to the cell inner membrane. The enzyme catalyses a quinone + NADH + 5 H(+)(in) = a quinol + NAD(+) + 4 H(+)(out). In terms of biological role, NDH-1 shuttles electrons from NADH, via FMN and iron-sulfur (Fe-S) centers, to quinones in the respiratory chain. The immediate electron acceptor for the enzyme in this species is believed to be ubiquinone. Couples the redox reaction to proton translocation (for every two electrons transferred, four hydrogen ions are translocated across the cytoplasmic membrane), and thus conserves the redox energy in a proton gradient. The polypeptide is NADH-quinone oxidoreductase subunit N 2 (Opitutus terrae (strain DSM 11246 / JCM 15787 / PB90-1)).